Reading from the N-terminus, the 257-residue chain is uncharacterized protein (257 aa).

A helical membrane pass occupies residues I6 to F26.

This sequence belongs to the staphylococcal tandem lipoprotein family.

The protein resides in the cell membrane. This is an uncharacterized protein from Staphylococcus aureus (strain COL).